Reading from the N-terminus, the 465-residue chain is Pre-mRNA-splicing factor URN1 (465 aa).

The region spanning 1–32 is the WW domain; it reads MRGEWQEFKTPAGKKYYYNKNTKQSRWEKPNL. Disordered regions lie at residues 28–49, 144–198, and 266–288; these read EKPNLKKGSNLESNAKESQTER, ERKD…VNQD, and ERSGNATAEESDSEDNSEDDSEV. At serine 150 the chain carries Phosphoserine. Over residues 160-175 the composition is skewed to polar residues; the sequence is LQESHTGLVSGYGSSS. Residues 176–192 are compositionally biased toward acidic residues; the sequence is GEEDEEEDEEEDEENEE. An FF domain is found at 212 to 266; it reads DIDERNIFFELFDRYKLDKFSTWSLQSKKIENDPDFYKIRDDTVRESLFEEWCGE. Residues 274–288 are compositionally biased toward acidic residues; sequence EESDSEDNSEDDSEV.

In terms of assembly, component of the precatalytic spliceosomal complex B. Interacts with PRP19.

It localises to the nucleus. Functionally, component of the spliceosome involved in mRNA processing. The protein is Pre-mRNA-splicing factor URN1 (URN1) of Saccharomyces cerevisiae (strain ATCC 204508 / S288c) (Baker's yeast).